The following is a 514-amino-acid chain: Adenylosuccinate synthetase 1, chloroplastic (514 aa).

The N-terminal 73 residues, 1–73, are a transit peptide targeting the chloroplast; sequence MAMAAAAAVA…AQAIERESVK (73 aa). GTP-binding positions include 100-106 and 128-130; these read GDEGKGK and GHT. Catalysis depends on D101, which acts as the Proton acceptor. Residues D101 and G128 each contribute to the Mg(2+) site. IMP contacts are provided by residues 101–104, 126–129, T218, R232, Q312, T327, and R391; these read DEGK and NAGH. The Proton donor role is filled by H129. A substrate-binding site is contributed by 387-393; sequence TTTGRPR. GTP-binding positions include R393, 419 to 421, and 502 to 504; these read KLD and GVG.

This sequence belongs to the adenylosuccinate synthetase family. In terms of assembly, homodimer. It depends on Mg(2+) as a cofactor.

It is found in the plastid. The protein resides in the chloroplast. It catalyses the reaction IMP + L-aspartate + GTP = N(6)-(1,2-dicarboxyethyl)-AMP + GDP + phosphate + 2 H(+). It participates in purine metabolism; AMP biosynthesis via de novo pathway; AMP from IMP: step 1/2. Functionally, plays an important role in the de novo pathway and in the salvage pathway of purine nucleotide biosynthesis. Catalyzes the first committed step in the biosynthesis of AMP from IMP. This chain is Adenylosuccinate synthetase 1, chloroplastic, found in Physcomitrium patens (Spreading-leaved earth moss).